A 176-amino-acid chain; its full sequence is Large ribosomal subunit protein uL6 (176 aa).

The protein belongs to the universal ribosomal protein uL6 family. Part of the 50S ribosomal subunit.

Its function is as follows. This protein binds to the 23S rRNA, and is important in its secondary structure. It is located near the subunit interface in the base of the L7/L12 stalk, and near the tRNA binding site of the peptidyltransferase center. This Methanospirillum hungatei JF-1 (strain ATCC 27890 / DSM 864 / NBRC 100397 / JF-1) protein is Large ribosomal subunit protein uL6.